The chain runs to 181 residues: tRNA (cytidine(56)-2'-O)-methyltransferase (181 aa).

S-adenosyl-L-methionine is bound by residues Leu-88, 115-119 (GGEKV), and 133-140 (IGNQPHSE).

Belongs to the aTrm56 family. As to quaternary structure, homodimer.

The protein localises to the cytoplasm. The enzyme catalyses cytidine(56) in tRNA + S-adenosyl-L-methionine = 2'-O-methylcytidine(56) in tRNA + S-adenosyl-L-homocysteine + H(+). Its function is as follows. Specifically catalyzes the AdoMet-dependent 2'-O-ribose methylation of cytidine at position 56 in tRNAs. The chain is tRNA (cytidine(56)-2'-O)-methyltransferase from Thermofilum pendens (strain DSM 2475 / Hrk 5).